Here is a 185-residue protein sequence, read N- to C-terminus: Calcium and integrin-binding family member 4 (185 aa).

EF-hand domains are found at residues 62–95, 97–132, and 138–174; these read RVNP…FSEQ, CPSL…LLKS, and DLLM…SPDF. Ca(2+)-binding residues include Asp110, Asn112, Asn114, and Asp121.

Interacts with ITGA2B (via C-terminus cytoplasmic tail region); the interaction is stabilized/increased in a calcium- and magnesium-dependent manner. In terms of tissue distribution, expressed weakly in megakaryocytes and endothelial cells.

This is Calcium and integrin-binding family member 4 (Cib4) from Mus musculus (Mouse).